Here is an 83-residue protein sequence, read N- to C-terminus: Snake venom metalloproteinase BnP1 (83 aa).

In terms of domain architecture, Peptidase M12B spans 8–83 (SYIELAVVAD…NPQCIINQPI (76 aa)). Residues E11, C77, and N80 each coordinate Ca(2+).

Belongs to the venom metalloproteinase (M12B) family. P-I subfamily. In terms of assembly, monomer. The cofactor is Zn(2+). As to expression, expressed by the venom gland.

The protein resides in the secreted. Its activity is regulated as follows. Inhibited by EDTA. Its function is as follows. This protein is a zinc protease from snake venom that is devoid of significant myotoxic and hemorrhagic activities. It hydrolyzes the Aalpha-chain and more slowly the Bbeta-chain of fibrin and fibrinogen, without affecting the gamma-chains. It induces cell detachment and a apoptosis (anoikis) in endothelial cells. This is Snake venom metalloproteinase BnP1 from Bothrops pauloensis (Neuwied's lancehead).